The chain runs to 579 residues: Mitogen-activated protein kinase kinase kinase 7 (579 aa).

An interaction with MAPK8IP1 region spans residues 1-300 (MSTASAASSS…FPGADEPLQY (300 aa)). In terms of domain architecture, Protein kinase spans 36-291 (IEVEEVVGRG…KIMTHLMRYF (256 aa)). ATP is bound by residues 42 to 50 (VGRGAFGVV) and Lys63. Lys72 participates in a covalent cross-link: Glycyl lysine isopeptide (Lys-Gly) (interchain with G-Cter in ubiquitin). Residue Asp156 is the Proton acceptor of the active site. Residue Lys158 forms a Glycyl lysine isopeptide (Lys-Gly) (interchain with G-Cter in ubiquitin) linkage. Phosphothreonine; by autocatalysis occurs at positions 184 and 187. Position 192 is a phosphoserine; by autocatalysis (Ser192). Residue Lys209 forms a Glycyl lysine isopeptide (Lys-Gly) (interchain with G-Cter in ubiquitin) linkage. 2 disordered regions span residues 301–339 (PCQY…EQVP) and 354–391 (KNQA…MSAD). Residues 306-322 (DEGQSNSATSTGSFMDI) show a composition bias toward polar residues. 2 stretches are compositionally biased toward low complexity: residues 323–334 (TSTNTSNKSDTN) and 361–375 (SESG…RGSS). Ser367, Ser389, and Ser412 each carry phosphoserine. Polar residues predominate over residues 416–425 (LTVTGTDPGQ). The tract at residues 416–466 (LTVTGTDPGQVSSRSSSPSVRMITTSGPTSEKPARSHPWTPDDSTDTNGSD) is disordered. The segment covering 426 to 436 (VSSRSSSPSVR) has biased composition (low complexity). Residue Ser428 is modified to Phosphoserine.

It belongs to the protein kinase superfamily. STE Ser/Thr protein kinase family. MAP kinase kinase kinase subfamily. As to quaternary structure, can form homodimer. Binds both upstream activators and downstream substrates in multimolecular complexes. Interacts with TAB1/MAP3K7IP1, TAB2/MAP3K7IP2 and TAB3/MAP3K7IP3. Identified in the TRIKA2 complex composed of MAP3K7/TAK1, TAB1/MAP3K7IP1 and TAB2/MAP3K7IP2. Interacts with PPM1L and PPM1B/PP2CB. Interaction with PP2A and PPP6C leads to its repressed activity. Interacts with TRAF6 and TAB1/MAP3K7IP1; during IL-1 signaling. Interacts with TAOK1 and TAOK2; interaction with TAOK2 interferes with MAP3K7 interaction with IKKA, thus preventing NF-kappa-B activation. Interacts with DYNC2I2 (via WD domains). Interacts with CYLD and RBCK1. Interacts with TGFBR1; induces MAP3K7/TAK1 activation by TRAF6. Interacts with MAPK8IP1 and SMAD6. Interacts with isoform 1 of VRK2. Interacts with DAB2; the interaction is induced by TGF-beta stimulation and may mediate TGF-beta stimulated JNK activation. Interacts with TRIM5. Part of a complex containing ITCH, NDFIP1 and MAP3K7. Interacts with IFIT5; the interaction synergizes the recruitment of IKK to MAP3K7 and enhances IKK phosphorylation. Interacts with PLEKHM1 (via N- and C-terminus). Found in a complex with SH3RF1, RAC2, MAP2K7/MKK7, MAPK8IP1/JIP1, MAPK8/JNK1 and MAPK9/JNK2. Interacts with SASH1. Interacts with RIPK1. The cofactor is Mg(2+). In terms of processing, association with TAB1/MAP3K7IP1 promotes autophosphorylation at Ser-192 and subsequent activation. Association with TAB2/MAP3K7IP2, itself associated with free unanchored Lys-63 polyubiquitin chain, promotes autophosphorylation and subsequent activation of MAP3K7. Dephosphorylation at Ser-192 by PPM1B/PP2CB and at Thr-187 by PP2A and PPP6C leads to inactivation. Post-translationally, 'Lys-48'-linked polyubiquitination at Lys-72 is induced by TNFalpha, and leads to proteasomal degradation. Undergoes 'Lys-48'-linked polyubiquitination catalyzed by ITCH. 'Lys-63'-linked polyubiquitination at Lys-158 by TRIM8 does not lead to proteasomal degradation but contributes to autophosphorylation and activation. Deubiquitinated by CYLD, a protease that selectively cleaves 'Lys-63'-linked ubiquitin chains. Deubiquitinated by USP19; leading to negative regulation of TNF-alpha- and IL-1beta-triggered NF-kappa-B activation.

The protein localises to the cytoplasm. Its subcellular location is the cell membrane. The catalysed reaction is L-seryl-[protein] + ATP = O-phospho-L-seryl-[protein] + ADP + H(+). It catalyses the reaction L-threonyl-[protein] + ATP = O-phospho-L-threonyl-[protein] + ADP + H(+). Its activity is regulated as follows. Activated by pro-inflammatory cytokines and in response to physical and chemical stresses, including osmotic stress, oxidative stress, arsenic and ultraviolet light irradiation. Activated by 'Lys-63'-linked polyubiquitination and by autophosphorylation. Association with TAB1/MAP3K7IP1 and TAB2/MAP3K7IP2 promotes activation through autophosphorylation, whereas PPM1B/PP2CB, PP2A and PPP6C dephosphorylation leads to inactivation. Ceramides are also able to activate MAP3K7/TAK1. Functionally, serine/threonine kinase which acts as an essential component of the MAP kinase signal transduction pathway. Plays an important role in the cascades of cellular responses evoked by changes in the environment. Mediates signal transduction of TRAF6, various cytokines including interleukin-1 (IL-1), transforming growth factor-beta (TGFB), TGFB-related factors like BMP2 and BMP4, toll-like receptors (TLR), tumor necrosis factor receptor CD40 and B-cell receptor (BCR). Once activated, acts as an upstream activator of the MKK/JNK signal transduction cascade and the p38 MAPK signal transduction cascade through the phosphorylation and activation of several MAP kinase kinases like MAP2K1/MEK1, MAP2K3/MKK3, MAP2K6/MKK6 and MAP2K7/MKK7. These MAP2Ks in turn activate p38 MAPKs and c-jun N-terminal kinases (JNKs); both p38 MAPK and JNK pathways control the transcription factors activator protein-1 (AP-1). Independently of MAP2Ks and p38 MAPKs, acts as a key activator of NF-kappa-B by promoting activation of the I-kappa-B-kinase (IKK) core complex. Mechanistically, recruited to polyubiquitin chains of RIPK2 and IKBKG/NEMO via TAB2/MAP3K7IP2 and TAB3/MAP3K7IP3, and catalyzes phosphorylation and activation of IKBKB/IKKB component of the IKK complex, leading to NF-kappa-B activation. In osmotic stress signaling, plays a major role in the activation of MAPK8/JNK1, but not that of NF-kappa-B. Promotes TRIM5 capsid-specific restriction activity. Phosphorylates RIPK1 at 'Ser-321' which positively regulates RIPK1 interaction with RIPK3 to promote necroptosis but negatively regulates RIPK1 kinase activity and its interaction with FADD to mediate apoptosis. Phosphorylates STING1 in response to cGAMP-activation, promoting association between STEEP1 and STING1 and STING1 translocation to COPII vesicles. This chain is Mitogen-activated protein kinase kinase kinase 7 (MAP3K7), found in Bos taurus (Bovine).